The chain runs to 383 residues: Acetylornithine deacetylase (383 aa).

Zn(2+) is bound at residue H80. Residue D82 is part of the active site. Zn(2+) is bound at residue D112. The active site involves E144. Zn(2+) contacts are provided by E145, E169, and H355.

The protein belongs to the peptidase M20A family. ArgE subfamily. Homodimer. It depends on Zn(2+) as a cofactor. Co(2+) serves as cofactor. Requires glutathione as cofactor.

Its subcellular location is the cytoplasm. The catalysed reaction is N(2)-acetyl-L-ornithine + H2O = L-ornithine + acetate. It participates in amino-acid biosynthesis; L-arginine biosynthesis; L-ornithine from N(2)-acetyl-L-ornithine (linear): step 1/1. Catalyzes the hydrolysis of the amide bond of N(2)-acetylated L-amino acids. Cleaves the acetyl group from N-acetyl-L-ornithine to form L-ornithine, an intermediate in L-arginine biosynthesis pathway, and a branchpoint in the synthesis of polyamines. This Shigella boydii serotype 4 (strain Sb227) protein is Acetylornithine deacetylase.